We begin with the raw amino-acid sequence, 102 residues long: NADH-quinone oxidoreductase subunit K 1 (102 aa).

Transmembrane regions (helical) follow at residues 5-25 (LLHV…CVLV), 30-50 (IIMM…AFVG), and 62-82 (VFAL…LALV).

This sequence belongs to the complex I subunit 4L family. In terms of assembly, NDH-1 is composed of 14 different subunits. Subunits NuoA, H, J, K, L, M, N constitute the membrane sector of the complex.

The protein localises to the cell inner membrane. It catalyses the reaction a quinone + NADH + 5 H(+)(in) = a quinol + NAD(+) + 4 H(+)(out). Its function is as follows. NDH-1 shuttles electrons from NADH, via FMN and iron-sulfur (Fe-S) centers, to quinones in the respiratory chain. The immediate electron acceptor for the enzyme in this species is believed to be ubiquinone. Couples the redox reaction to proton translocation (for every two electrons transferred, four hydrogen ions are translocated across the cytoplasmic membrane), and thus conserves the redox energy in a proton gradient. The protein is NADH-quinone oxidoreductase subunit K 1 of Geotalea uraniireducens (strain Rf4) (Geobacter uraniireducens).